A 372-amino-acid polypeptide reads, in one-letter code: N-methyl-L-tryptophan oxidase (372 aa).

Residue 4–34 (DLIIIGSGSVGAAAGYYATRAGLNVLMTDAH) participates in FAD binding. An S-8alpha-FAD cysteine modification is found at cysteine 308.

Belongs to the MSOX/MTOX family. MTOX subfamily. Monomer. FAD is required as a cofactor.

It catalyses the reaction N(alpha)-methyl-L-tryptophan + O2 + H2O = L-tryptophan + formaldehyde + H2O2. Catalyzes the oxidative demethylation of N-methyl-L-tryptophan. The sequence is that of N-methyl-L-tryptophan oxidase from Escherichia coli (strain SMS-3-5 / SECEC).